The primary structure comprises 613 residues: RUN domain-containing protein 1 (613 aa).

The tract at residues 15–36 is disordered; that stretch reads AAVGPKAKDEEEEEEEPLPPCE. Threonine 54 is modified (phosphothreonine). Low complexity predominate over residues 57–69; sequence LEEATAEEPGAAP. 3 disordered regions span residues 57-79, 140-177, and 305-330; these read LEEA…PGRT, YEGP…RLET, and GKTG…KAED. Serine 71 and serine 75 each carry phosphoserine. Residues 159–177 show a composition bias toward basic and acidic residues; that stretch reads PWLRGEDQSEQEKQERLET. A coiled-coil region spans residues 160–235; sequence WLRGEDQSEQ…IKKLDMNLNE (76 aa). Residues 309–325 are compositionally biased toward polar residues; sequence NGCSRTGSSRTPPGNSK. The RUN domain maps to 421–602; it reads ELTMAVRKEL…LKFSLPVDLA (182 aa). Residue serine 497 is modified to Phosphoserine.

May play a role as p53/TP53 inhibitor and thus may have oncogenic activity. This chain is RUN domain-containing protein 1 (RUNDC1), found in Homo sapiens (Human).